We begin with the raw amino-acid sequence, 654 residues long: DNA-directed RNA polymerase III subunit RPC3 (654 aa).

The residue at position 27 (Thr-27) is a Phosphothreonine. 2 disordered regions span residues 381-401 and 422-448; these read LSRKPSDNKKRSGSNAAASLP and KSLQESGDTQEEDEEEEDLDADTEDPH. Phosphoserine occurs at positions 392 and 394. The segment covering 429–444 has biased composition (acidic residues); sequence DTQEEDEEEEDLDADT. The leucine-zipper stretch occupies residues 581-602; that stretch reads LEWNMANLLFKKEKLKQENSTL.

This sequence belongs to the RNA polymerase beta chain family. As to quaternary structure, component of the RNA polymerase III (Pol III) complex consisting of 17 subunits.

The protein resides in the cytoplasm. Its subcellular location is the nucleus. Its function is as follows. DNA-dependent RNA polymerase catalyzes the transcription of DNA into RNA using the four ribonucleoside triphosphates as substrates. Specific core component of RNA polymerase III which synthesizes small RNAs, such as 5S rRNA and tRNAs. This Saccharomyces cerevisiae (strain YJM789) (Baker's yeast) protein is DNA-directed RNA polymerase III subunit RPC3 (RPC82).